A 555-amino-acid chain; its full sequence is MFCYQCEQTDRTGARPGCASAKGNCGKDSTTADLQDLLVHAVKGIAQYGAIARTMGVPDREAERFVLYAMFTTLTNVNFHAARFVALLREAAQTRDRVKAACEAHARAAGTAVPVLHGPAEWQPADDLAGLLKQAASVGIDAGLDTVGADIVGLRALVLYGLKGVCAYAHHAQVLGYERDDIYEGVDAALAFLAGNPADVDALLAHALDLGRLNLTVMELLDNANTGRFGVQQPSAVRVSPVAGKAILVSGHDLGDLHALLEQTAGTGIQVYTHGEMLPAHAYPSLKAFPHLAGNYGGAWQDQQSDFARFPGPILMTSNCIIEPLPQYRQRIFTTGPVGWPGVRHLEHHDFPTLIRAAQALPGFQATAPEQTITVGFGRHAVLGVADKVIDAVKAGQIRHFFLIGGCDGAAPGRNYYTEFAEQAPDDTVVMTLGCNKYRFNRHAFGDIGGIPRLLDIGQCNDSYSAIRIATALADAFECGVNDLPLSLVISWFEQKAAAVLLTLLALGIRNIRLGPTLPAFVTPGVLAVLVDQFGIQPIGDAGADLAAALARRAA.

[4Fe-4S] cluster contacts are provided by Cys3, Cys6, Cys18, and Cys25. The hybrid [4Fe-2O-2S] cluster site is built by His252, Glu276, Cys320, Cys407, Cys435, Cys460, Glu494, and Lys496. Cys407 carries the cysteine persulfide modification.

It belongs to the HCP family. [4Fe-4S] cluster serves as cofactor. It depends on hybrid [4Fe-2O-2S] cluster as a cofactor.

It is found in the cytoplasm. It catalyses the reaction A + NH4(+) + H2O = hydroxylamine + AH2 + H(+). Catalyzes the reduction of hydroxylamine to form NH(3) and H(2)O. The sequence is that of Hydroxylamine reductase from Burkholderia ambifaria (strain MC40-6).